A 452-amino-acid polypeptide reads, in one-letter code: Probable 1,4-beta-D-glucan cellobiohydrolase A (452 aa).

An N-terminal signal peptide occupies residues 1-17 (MHQRALLFSALAVAANA). N-linked (GlcNAc...) asparagine glycosylation is present at N81. Residue E226 is the Nucleophile of the active site. E231 functions as the Proton donor in the catalytic mechanism. N-linked (GlcNAc...) asparagine glycosylation is present at N284. The tract at residues 406–432 (DPSKPGVARGTCEHGAGDPEKVESQHP) is disordered. Positions 416-431 (TCEHGAGDPEKVESQH) are enriched in basic and acidic residues.

This sequence belongs to the glycosyl hydrolase 7 (cellulase C) family.

Its subcellular location is the secreted. The catalysed reaction is Hydrolysis of (1-&gt;4)-beta-D-glucosidic linkages in cellulose and cellotetraose, releasing cellobiose from the non-reducing ends of the chains.. The biological conversion of cellulose to glucose generally requires three types of hydrolytic enzymes: (1) Endoglucanases which cut internal beta-1,4-glucosidic bonds; (2) Exocellobiohydrolases that cut the disaccharide cellobiose from the non-reducing end of the cellulose polymer chain; (3) Beta-1,4-glucosidases which hydrolyze the cellobiose and other short cello-oligosaccharides to glucose. In Neosartorya fischeri (strain ATCC 1020 / DSM 3700 / CBS 544.65 / FGSC A1164 / JCM 1740 / NRRL 181 / WB 181) (Aspergillus fischerianus), this protein is Probable 1,4-beta-D-glucan cellobiohydrolase A (cbhA).